Here is a 141-residue protein sequence, read N- to C-terminus: ATP synthase epsilon chain 1 (141 aa).

The protein belongs to the ATPase epsilon chain family. F-type ATPases have 2 components, CF(1) - the catalytic core - and CF(0) - the membrane proton channel. CF(1) has five subunits: alpha(3), beta(3), gamma(1), delta(1), epsilon(1). CF(0) has three main subunits: a, b and c.

It is found in the cell inner membrane. Functionally, produces ATP from ADP in the presence of a proton gradient across the membrane. This Paraburkholderia xenovorans (strain LB400) protein is ATP synthase epsilon chain 1.